The following is an 881-amino-acid chain: Putative cation exchanger C521.04c (881 aa).

Residues 1–19 (MSQPADINQSESSAETITQ) are compositionally biased toward polar residues. Disordered regions lie at residues 1–39 (MSQP…EQNL) and 52–142 (ADAT…LRSE). Basic and acidic residues predominate over residues 63 to 77 (NDRDIYSPREIDQYT). The span at 83 to 95 (RTDPSTSTISNAR) shows a compositional bias: polar residues. Positions 99–113 (RNSVSRLSRSSSNVR) are enriched in low complexity. Ser129 is modified (phosphoserine). 8 consecutive transmembrane segments (helical) span residues 200 to 220 (IWLI…YIFF), 329 to 349 (LIIA…IFFV), 407 to 427 (IYII…FGFF), 438 to 458 (VFLF…IGMA), 471 to 491 (GAFI…SVAL), 504 to 524 (IGSI…AGAI), 537 to 557 (GATS…TMLF), and 594 to 614 (LPFT…GLWF). The segment at 641–717 (VGEPVNQDTA…SQNSHGDDAP (77 aa)) is disordered. Residues 646–657 (NQDTAGNMSDSS) show a composition bias toward polar residues. Low complexity predominate over residues 678–688 (SSGLSSNGSEN). The next 5 membrane-spanning stretches (helical) occupy residues 726-746 (IILL…VEHV), 762-782 (LTLF…SFAL), 794-814 (SAYA…YSLF), 828-848 (LFTM…VFLL), and 859-879 (YFKG…FTFF).

This sequence belongs to the Ca(2+):cation antiporter (CaCA) (TC 2.A.19) family.

Its subcellular location is the endoplasmic reticulum membrane. Putative cation exchanger. The protein is Putative cation exchanger C521.04c of Schizosaccharomyces pombe (strain 972 / ATCC 24843) (Fission yeast).